The following is a 479-amino-acid chain: Poly(A) polymerase catalytic subunit (479 aa).

Active-site residues include Asp-202 and Asp-204. Ca(2+) is bound by residues Asp-202, Asp-204, and Asp-253.

This sequence belongs to the poxviridae poly(A) polymerase catalytic subunit family. As to quaternary structure, heterodimer of a large (catalytic) subunit and a small (regulatory) subunit.

The enzyme catalyses RNA(n) + ATP = RNA(n)-3'-adenine ribonucleotide + diphosphate. In terms of biological role, polymerase that creates the 3'-poly(A) tail of mRNA's. This Cowpox virus (strain GRI-90 / Grishak) (CPV) protein is Poly(A) polymerase catalytic subunit (OPG063).